Reading from the N-terminus, the 72-residue chain is ATP synthase subunit c (72 aa).

The next 2 helical transmembrane spans lie at 1 to 21 and 48 to 68; these read MSLGVLAAAIAVGLGALGAGI and MFIGVALVEALPIIGVVFSFI.

This sequence belongs to the ATPase C chain family. F-type ATPases have 2 components, F(1) - the catalytic core - and F(0) - the membrane proton channel. F(1) has five subunits: alpha(3), beta(3), gamma(1), delta(1), epsilon(1). F(0) has three main subunits: a(1), b(2) and c(10-14). The alpha and beta chains form an alternating ring which encloses part of the gamma chain. F(1) is attached to F(0) by a central stalk formed by the gamma and epsilon chains, while a peripheral stalk is formed by the delta and b chains.

The protein resides in the cell membrane. Its function is as follows. F(1)F(0) ATP synthase produces ATP from ADP in the presence of a proton or sodium gradient. F-type ATPases consist of two structural domains, F(1) containing the extramembraneous catalytic core and F(0) containing the membrane proton channel, linked together by a central stalk and a peripheral stalk. During catalysis, ATP synthesis in the catalytic domain of F(1) is coupled via a rotary mechanism of the central stalk subunits to proton translocation. In terms of biological role, key component of the F(0) channel; it plays a direct role in translocation across the membrane. A homomeric c-ring of between 10-14 subunits forms the central stalk rotor element with the F(1) delta and epsilon subunits. This is ATP synthase subunit c from Geobacillus kaustophilus (strain HTA426).